The primary structure comprises 622 residues: MSTDNKQSLPALTLAAIGVVYGDIGTSPLYTLRECLSGQFGFGVERDAVFGFLSLIFWLLIFTVSIKYITFVMRADNAGEGGILTLMSLAGRNTSARMTSVLVILGLIGGSFFYGEVVITPAISVMSAIEGLEIIAPQLDTWIVPISIIVLTLLFVIQKHGTGMVGKLFAPIMLIWFLLLAVLGARSIYANPEVLQALNPYWAVHFFLQYKTVSFIALGAVVLSITGVEALYADMGHFGKLPIRVAWFSVVLPSLVLNYFGQGALLLKHPEAIKNPFFLLAPEWALIPMLIIATLATVIASQAVISGVFSLTRQAVRLGYLSPMRIIHTSEMESGQIYIPFINWLLYVSVVIVIVSFEHSSNLAAAYGIAVTGTMVLTSILSATVARKNWHWNKLFVGLMLVAFLCIDIPLFSANLDKIVSGGWLPLSLGMVMFTVMTTWKSERFRLLRRMHEHGNSLEAMISSLEKSPPVRVPGTAVYMSRALNVIPFALLHNLKHNKVLHERVILLTLRTEDAPYVHNVRRVQIEQLSPSFWRVVASYGWRETPNVEEVFHRCGLEGLSCRMMETSFFMSHESLIIGKRPWYLRLRGKLYLLLQRNALRAPDQFEIPPNRVIELGTQVEI.

12 helical membrane-spanning segments follow: residues 9–29, 49–69, 101–121, 137–157, 163–183, 213–233, 247–267, 276–296, 337–357, 363–383, 395–415, and 419–439; these read LPAL…TSPL, VFGF…IKYI, VLVI…VITP, PQLD…LFVI, GMVG…LAVL, VSFI…ALYA, WFSV…ALLL, PFFL…ATLA, IYIP…IVSF, LAAA…ILSA, LFVG…FSAN, and IVSG…VMTT.

Belongs to the HAK/KUP transporter (TC 2.A.72) family.

It localises to the cell inner membrane. It carries out the reaction K(+)(in) + H(+)(in) = K(+)(out) + H(+)(out). Responsible for the low-affinity transport of potassium into the cell. Likely operates as a K(+):H(+) symporter. The protein is Low affinity potassium transport system protein Kup of Klebsiella pneumoniae subsp. pneumoniae (strain ATCC 700721 / MGH 78578).